We begin with the raw amino-acid sequence, 129 residues long: Large ribosomal subunit protein bL12 (129 aa).

Residues 94 to 113 (TEGLPKTVKEKTSKSDAEDT) form a disordered region.

This sequence belongs to the bacterial ribosomal protein bL12 family. In terms of assembly, homodimer. Part of the ribosomal stalk of the 50S ribosomal subunit. Forms a multimeric L10(L12)X complex, where L10 forms an elongated spine to which 2 to 4 L12 dimers bind in a sequential fashion. Binds GTP-bound translation factors.

Its function is as follows. Forms part of the ribosomal stalk which helps the ribosome interact with GTP-bound translation factors. Is thus essential for accurate translation. This chain is Large ribosomal subunit protein bL12, found in Chlamydia pneumoniae (Chlamydophila pneumoniae).